A 210-amino-acid polypeptide reads, in one-letter code: Outer-membrane lipoprotein carrier protein (210 aa).

The N-terminal stretch at 1-26 is a signal peptide; it reads MHMIRRAAGALAVFAVAALAAAPAWA.

It belongs to the LolA family. Monomer.

It localises to the periplasm. Participates in the translocation of lipoproteins from the inner membrane to the outer membrane. Only forms a complex with a lipoprotein if the residue after the N-terminal Cys is not an aspartate (The Asp acts as a targeting signal to indicate that the lipoprotein should stay in the inner membrane). The chain is Outer-membrane lipoprotein carrier protein from Bordetella bronchiseptica (strain ATCC BAA-588 / NCTC 13252 / RB50) (Alcaligenes bronchisepticus).